The primary structure comprises 1451 residues: MEETGDSKLVPRDEEEIVNDNDETKAPSEEEEGEDVFDSSEEDEDIDEDEDEARKVQEGFIVNDDDENEDPGTSISKKRRKHKRREREEDDRLSEDDLDLLMENAGVERTKASSSSGKFKRLKRVGDEGNAAESESDNVAASRQDSTSKLEDFFSEDEEEEESGLRNGRNNEYGRDEEDHENRNRTADKGGILDELDDFIEDDEFSDEDDETRQRRIQEKKLLREQSIKQPTQITGLSSDKIDEMYDIFGDGHDYDWALEIENEELENGNDNNEAEEEEIDEETGAIKSTKKKISLQDIYDLEDLKKNLMTEGDMKIRKTDIPERYQELRAGITDYGNMSSEDQELERNWIAEKISVDKNFDANYDLTEFKEAIGNAIKFITKENLEVPFIYAYRRNYISSREKDGFLLTEDDLWDIVSLDIEFHSLVNKKDYVQRFYAELHIDDPIVTEYFKNQNTASIAELNSLQDIYDYLEFKYANEINEMFINHTGKTGKKHLKNSSYEKFKASPLYQAVSDIGISAEDVGENISSQHQIHPPVDHPSSKPVEVIESILNANSGDLQVFTSNTKLAIDTVQKYYSLELSKNTKIREKVRSDFSKYYLADVVLTAKGKKEIQKGSLYEDIKYAINRTPMHFRRDPDVFLKMVEAESLNLLSVKLHMSSQAQYIEHLFQIALETTNTSDIAIEWNNFRKLAFNQAMDKIFQDISQEVKDNLTKNCQKLVAKTVRHKFMTKLDQAPFIPNVRDPKIPKILSLTCGQGRFGADAIIAVYVNRKGDFIRDYKIVDNPFDKTNPEKFEDTLDNIIQSCQPNAIGINGPNPKTQKFYKRLQEVLHKKQIVDSRGHTIPIIYVEDEVAIRYQNSERAAQEFPNKPPLVKYCIALARYMHSPLLEYANLTSEEVRSLSIHPHQNLLSSEQLSWALETAFVDIVNLVSVEVNKATDNNYYASALKYISGFGKRKAIDFLQSLQRLNEPLLARQQLITHNILHKTIFMNSAGFLYISWNEKRQKYEDLEHDQLDSTRIHPEDYHLATKVAADALEYDPDTIAEKEEQGTMSEFIELLREDPDRRAKLESLNLESYAEELEKNTGLRKLNNLNTIVLELLDGFEELRNDFHPLQGDEIFQSLTGESEKTFFKGSIIPVRVERFWHNDIICTTNSEVECVVNAQRHAGAQLRRPANEIYEIGKTYPAKVIYIDYANITAEVSLLDHDVKQQYVPISYSKDPSIWDLKQELEDAEEERKLMMAEARAKRTHRVINHPYYFPFNGRQAEDYLRSKERGEFVIRQSSRGDDHLVITWKLDKDLFQHIDIQELEKENPLALGKVLIVDNQKYNDLDQIIVEYLQNKVRLLNEMTSSEKFKSGTKKDVVKFIEDYSRVNPNKSVYYFSLNHDNPGWFYLMFKINANSKLYTWNVKLTNTGYFLVNYNYPSVIQLCNGFKTLLKSNSSKNRMNNYR.

A compositionally biased stretch (basic and acidic residues) spans 1-12 (MEETGDSKLVPR). A disordered region spans residues 1–217 (MEETGDSKLV…EDDETRQRRI (217 aa)). Positions 8-12 (KLVPR) match the Nuclear localization signal motif. The segment covering 29 to 51 (EEEEGEDVFDSSEEDEDIDEDED) has biased composition (acidic residues). The span at 76–85 (SKKRRKHKRR) shows a compositional bias: basic residues. The Nuclear localization signal signature appears at 77–85 (KKRRKHKRR). Residues 88 to 100 (EEDDRLSEDDLDL) are compositionally biased toward acidic residues. At S94 the chain carries Phosphoserine. Positions 120–125 (KRLKRV) match the Nuclear localization signal motif. Residues S134, S136, S148, and S155 each carry the phosphoserine modification. Over residues 153–162 (FFSEDEEEEE) the composition is skewed to acidic residues. Basic and acidic residues predominate over residues 180-192 (HENRNRTADKGGI). Positions 194–211 (DELDDFIEDDEFSDEDDE) are enriched in acidic residues. Residues S206 and S295 each carry the phosphoserine modification. The 98-residue stretch at 1257–1354 (PYYFPFNGRQ…RLLNEMTSSE (98 aa)) folds into the SH2 domain.

Belongs to the SPT6 family. As to quaternary structure, interacts with CTR9.

It localises to the nucleus. Its subcellular location is the chromosome. Functionally, histone H3-H4 chaperone that plays a role in maintenance of chromatin structure during RNA polymerase II transcription elongation thereby repressing transcription initiation from cryptic promoters. Mediates the reassembly of nucleosomes onto the promoters of at least a selected set of genes during repression; the nucleosome reassembly is essential for transcriptional repression. Essential for viability. The polypeptide is Transcription elongation factor SPT6 (SPT6) (Saccharomyces cerevisiae (strain ATCC 204508 / S288c) (Baker's yeast)).